The primary structure comprises 268 residues: tRNA pseudouridine synthase A (268 aa).

The Nucleophile role is filled by aspartate 52. Position 110 (tyrosine 110) interacts with substrate.

The protein belongs to the tRNA pseudouridine synthase TruA family. Homodimer.

The enzyme catalyses uridine(38/39/40) in tRNA = pseudouridine(38/39/40) in tRNA. Formation of pseudouridine at positions 38, 39 and 40 in the anticodon stem and loop of transfer RNAs. This is tRNA pseudouridine synthase A from Prochlorococcus marinus subsp. pastoris (strain CCMP1986 / NIES-2087 / MED4).